A 121-amino-acid chain; its full sequence is Small ribosomal subunit protein uS13 (121 aa).

The interval 92–121 (RKGLPMRGQRTRTNARTRKGPRRAAQALKK) is disordered.

It belongs to the universal ribosomal protein uS13 family. Part of the 30S ribosomal subunit. Forms a loose heterodimer with protein S19. Forms two bridges to the 50S subunit in the 70S ribosome.

Located at the top of the head of the 30S subunit, it contacts several helices of the 16S rRNA. In the 70S ribosome it contacts the 23S rRNA (bridge B1a) and protein L5 of the 50S subunit (bridge B1b), connecting the 2 subunits; these bridges are implicated in subunit movement. Contacts the tRNAs in the A and P-sites. This is Small ribosomal subunit protein uS13 from Burkholderia cenocepacia (strain HI2424).